A 287-amino-acid polypeptide reads, in one-letter code: Prepilin leader peptidase/N-methyltransferase (287 aa).

The helical transmembrane segment at 12–32 (FMYLVVGLFSLAVGSLLNVII) threads the bilayer. The Zn(2+) site is built by Cys-71, Cys-74, Cys-96, and Cys-99. A run of 5 helical transmembrane segments spans residues 127–147 (FTIQLLFALLAIWILISLVFI), 158–178 (LTLGLLWIGLIANTQNVFVSL), 182–202 (VLSCAGAYLALWLFINLFYLM), 215–235 (LFAAFGAWLGWMYLPIILLIS), and 259–279 (PFGPFLCISGLIAMFWGDSII).

This sequence belongs to the peptidase A24 family. Zn(2+) serves as cofactor.

The protein localises to the cell inner membrane. It catalyses the reaction Typically cleaves a -Gly-|-Phe- bond to release an N-terminal, basic peptide of 5-8 residues from type IV prepilin, and then N-methylates the new N-terminal amino group, the methyl donor being S-adenosyl-L-methionine.. Functionally, plays an essential role in type IV pili and type II pseudopili formation by proteolytically removing the leader sequence from substrate proteins and subsequently monomethylating the alpha-amino group of the newly exposed N-terminal phenylalanine. The sequence is that of Prepilin leader peptidase/N-methyltransferase (pilD) from Legionella pneumophila.